We begin with the raw amino-acid sequence, 270 residues long: 4-hydroxy-tetrahydrodipicolinate reductase (270 aa).

NAD(+) contacts are provided by residues Gly8–Met13 and Glu34. Position 35 (Arg35) interacts with NADP(+). Residues Gly98–Thr100 and Ser122–Met125 each bind NAD(+). Catalysis depends on His155, which acts as the Proton donor/acceptor. His156 serves as a coordination point for (S)-2,3,4,5-tetrahydrodipicolinate. Lys159 functions as the Proton donor in the catalytic mechanism. Gly165–Thr166 provides a ligand contact to (S)-2,3,4,5-tetrahydrodipicolinate.

The protein belongs to the DapB family.

The protein resides in the cytoplasm. The enzyme catalyses (S)-2,3,4,5-tetrahydrodipicolinate + NAD(+) + H2O = (2S,4S)-4-hydroxy-2,3,4,5-tetrahydrodipicolinate + NADH + H(+). It catalyses the reaction (S)-2,3,4,5-tetrahydrodipicolinate + NADP(+) + H2O = (2S,4S)-4-hydroxy-2,3,4,5-tetrahydrodipicolinate + NADPH + H(+). It functions in the pathway amino-acid biosynthesis; L-lysine biosynthesis via DAP pathway; (S)-tetrahydrodipicolinate from L-aspartate: step 4/4. Catalyzes the conversion of 4-hydroxy-tetrahydrodipicolinate (HTPA) to tetrahydrodipicolinate. The protein is 4-hydroxy-tetrahydrodipicolinate reductase of Anaeromyxobacter dehalogenans (strain 2CP-C).